We begin with the raw amino-acid sequence, 235 residues long: Aspartate/glutamate leucyltransferase (235 aa).

Belongs to the R-transferase family. Bpt subfamily.

Its subcellular location is the cytoplasm. It carries out the reaction N-terminal L-glutamyl-[protein] + L-leucyl-tRNA(Leu) = N-terminal L-leucyl-L-glutamyl-[protein] + tRNA(Leu) + H(+). The enzyme catalyses N-terminal L-aspartyl-[protein] + L-leucyl-tRNA(Leu) = N-terminal L-leucyl-L-aspartyl-[protein] + tRNA(Leu) + H(+). Functionally, functions in the N-end rule pathway of protein degradation where it conjugates Leu from its aminoacyl-tRNA to the N-termini of proteins containing an N-terminal aspartate or glutamate. The polypeptide is Aspartate/glutamate leucyltransferase (Pseudomonas aeruginosa (strain LESB58)).